Consider the following 394-residue polypeptide: Zinc-regulated GTPase metalloprotein activator 1 (394 aa).

The short motif at 16 to 23 (EDCPELVP) is the psi-PxLVp motif element. Residue 48-55 (GYLGAGKT) coordinates GTP. Zn(2+) is bound by residues Cys106, Cys108, and Cys109. The CXCC motif signature appears at 106-109 (CLCC). Residues 109–113 (CSVKD) and 202–205 (NKTD) contribute to the GTP site. A CobW C-terminal domain is found at 272-375 (IVTVTFDVPG…ILQQLFITAV (104 aa)).

Belongs to the SIMIBI class G3E GTPase family. ZNG1 subfamily.

The protein localises to the nucleus. It carries out the reaction GTP + H2O = GDP + phosphate + H(+). Functionally, zinc chaperone that directly transfers zinc cofactor to target metalloproteins, thereby activating them. Catalyzes zinc insertion into the active site of methionine aminopeptidase METAP1, which function to cleave the initiator methionine from polypeptides during or after protein translation. Mechanistically, the N-terminal psi-PxLVp motif binds to the C6H2-type zinc finger of inactive form of METAP1. After formation of the docked complex, zinc is transferred from the CXCC motif in the GTPase domain of ZNG1 to the zinc binding site in the peptidase domain of METAP1 in a process requiring GTP hydrolysis. GTP/GDP exchange is required for release of active METAP1. The polypeptide is Zinc-regulated GTPase metalloprotein activator 1 (Zng1) (Rattus norvegicus (Rat)).